The sequence spans 227 residues: Cytochrome c oxidase subunit 2 (227 aa).

At 1 to 14 (MAHAAQVGLQDATS) the chain is on the mitochondrial intermembrane side. Residues 15-45 (PIMEELITFHDHALMIIFLICFLVLYALFLT) form a helical membrane-spanning segment. The Mitochondrial matrix portion of the chain corresponds to 46–59 (LTTKLTSTNISDAQ). A helical membrane pass occupies residues 60–87 (EMETIWTILPAIILVLIALPSLRILYMT). The Mitochondrial intermembrane segment spans residues 88-227 (DEINDPSFTI…IFEMGPVFAL (140 aa)). Cu cation-binding residues include histidine 161, cysteine 196, glutamate 198, cysteine 200, histidine 204, and methionine 207. Glutamate 198 lines the Mg(2+) pocket.

This sequence belongs to the cytochrome c oxidase subunit 2 family. In terms of assembly, component of the cytochrome c oxidase (complex IV, CIV), a multisubunit enzyme composed of 14 subunits. The complex is composed of a catalytic core of 3 subunits MT-CO1, MT-CO2 and MT-CO3, encoded in the mitochondrial DNA, and 11 supernumerary subunits COX4I, COX5A, COX5B, COX6A, COX6B, COX6C, COX7A, COX7B, COX7C, COX8 and NDUFA4, which are encoded in the nuclear genome. The complex exists as a monomer or a dimer and forms supercomplexes (SCs) in the inner mitochondrial membrane with NADH-ubiquinone oxidoreductase (complex I, CI) and ubiquinol-cytochrome c oxidoreductase (cytochrome b-c1 complex, complex III, CIII), resulting in different assemblies (supercomplex SCI(1)III(2)IV(1) and megacomplex MCI(2)III(2)IV(2)). Found in a complex with TMEM177, COA6, COX18, COX20, SCO1 and SCO2. Interacts with TMEM177 in a COX20-dependent manner. Interacts with COX20. Interacts with COX16. Cu cation serves as cofactor.

The protein localises to the mitochondrion inner membrane. It carries out the reaction 4 Fe(II)-[cytochrome c] + O2 + 8 H(+)(in) = 4 Fe(III)-[cytochrome c] + 2 H2O + 4 H(+)(out). Functionally, component of the cytochrome c oxidase, the last enzyme in the mitochondrial electron transport chain which drives oxidative phosphorylation. The respiratory chain contains 3 multisubunit complexes succinate dehydrogenase (complex II, CII), ubiquinol-cytochrome c oxidoreductase (cytochrome b-c1 complex, complex III, CIII) and cytochrome c oxidase (complex IV, CIV), that cooperate to transfer electrons derived from NADH and succinate to molecular oxygen, creating an electrochemical gradient over the inner membrane that drives transmembrane transport and the ATP synthase. Cytochrome c oxidase is the component of the respiratory chain that catalyzes the reduction of oxygen to water. Electrons originating from reduced cytochrome c in the intermembrane space (IMS) are transferred via the dinuclear copper A center (CU(A)) of subunit 2 and heme A of subunit 1 to the active site in subunit 1, a binuclear center (BNC) formed by heme A3 and copper B (CU(B)). The BNC reduces molecular oxygen to 2 water molecules using 4 electrons from cytochrome c in the IMS and 4 protons from the mitochondrial matrix. This is Cytochrome c oxidase subunit 2 (MT-CO2) from Gorilla gorilla gorilla (Western lowland gorilla).